A 236-amino-acid chain; its full sequence is Phosphoribosylaminoimidazole-succinocarboxamide synthase (236 aa).

The protein belongs to the SAICAR synthetase family.

The enzyme catalyses 5-amino-1-(5-phospho-D-ribosyl)imidazole-4-carboxylate + L-aspartate + ATP = (2S)-2-[5-amino-1-(5-phospho-beta-D-ribosyl)imidazole-4-carboxamido]succinate + ADP + phosphate + 2 H(+). It functions in the pathway purine metabolism; IMP biosynthesis via de novo pathway; 5-amino-1-(5-phospho-D-ribosyl)imidazole-4-carboxamide from 5-amino-1-(5-phospho-D-ribosyl)imidazole-4-carboxylate: step 1/2. This Rickettsia typhi (strain ATCC VR-144 / Wilmington) protein is Phosphoribosylaminoimidazole-succinocarboxamide synthase.